A 430-amino-acid polypeptide reads, in one-letter code: Leucoanthocyanidin dioxygenase (430 aa).

Residues Leu-212–Pro-311 enclose the Fe2OG dioxygenase domain. Fe cation is bound by residues His-236, Asp-238, and His-292. Basic and acidic residues-rich tracts occupy residues Lys-376–Gly-407 and Lys-415–Lys-430. The interval Lys-376–Lys-430 is disordered.

Belongs to the iron/ascorbate-dependent oxidoreductase family. It depends on Fe cation as a cofactor. L-ascorbate serves as cofactor. Predominantly expressed in corollas and at lower levels in anthers.

It catalyses the reaction a (2R,3S,4S)-leucoanthocyanidin + 2-oxoglutarate + O2 = a 4-H-anthocyanidin with a 3-hydroxy group + succinate + CO2 + 2 H2O. Its pathway is pigment biosynthesis; anthocyanin biosynthesis. In terms of biological role, oxidation of leucoanthocyanidins into anthocyanidins. This chain is Leucoanthocyanidin dioxygenase (ANT17), found in Petunia hybrida (Petunia).